We begin with the raw amino-acid sequence, 172 residues long: Cold-inducible RNA-binding protein (172 aa).

The region spanning 6–84 (GKLFVGGLSF…RQIRVDQAGK (79 aa)) is the RRM domain. The interval 70–172 (KSVDGRQIRV…SYDSYATHNE (103 aa)) is disordered. 2 stretches are compositionally biased toward gly residues: residues 93 to 105 (YRGG…GFFR) and 114 to 137 (FSRG…GYGG). Phosphoserine occurs at positions 130, 138, 146, 156, 159, and 163. Low complexity predominate over residues 138-172 (SRDYYASRSQGGSYGYRSSGGSYRDSYDSYATHNE).

Interacts with EIF4G1. Associates with ribosomes. Methylated on arginine residues. Methylation of the RGG motifs is a prerequisite for recruitment into SGs. Post-translationally, phosphorylated by CK2, GSK3A and GSK3B. Phosphorylation by GSK3B increases RNA-binding activity to the TXN 3'-UTR transcript upon exposure to UV radiation. Ubiquitous.

It is found in the nucleus. Its subcellular location is the nucleoplasm. The protein localises to the cytoplasm. Its function is as follows. Cold-inducible mRNA binding protein that plays a protective role in the genotoxic stress response by stabilizing transcripts of genes involved in cell survival. Promotes assembly of stress granules (SGs), when overexpressed. Seems to play an essential role in cold-induced suppression of cell proliferation. Acts as a translational repressor. Acts as a translational activator. Binds specifically to the 3'-untranslated regions (3'-UTRs) of stress-responsive transcripts RPA2 and TXN. This Mus musculus (Mouse) protein is Cold-inducible RNA-binding protein (Cirbp).